Consider the following 192-residue polypeptide: Leucine-rich repeat-containing protein 51 (192 aa).

LRR repeat units follow at residues Ser49 to Ala71, Asn80 to Phe101, and Asn103 to Ala124. Residues Asn137 to Trp175 form the LRRCT domain.

The protein localises to the cytoplasm. The protein is Leucine-rich repeat-containing protein 51 of Homo sapiens (Human).